A 106-amino-acid chain; its full sequence is uncharacterized protein (106 aa).

The first 31 residues, 1 to 31, serve as a signal peptide directing secretion; the sequence is MKKKTKIILSLLAALIVILIVLPVLSPVVFT.

This is an uncharacterized protein from Bacillus subtilis (strain 168).